A 294-amino-acid chain; its full sequence is Sulfotransferase 1E1 (294 aa).

Position 47–52 (47–52 (KSGTTW)) interacts with 3'-phosphoadenylyl sulfate. 105 to 107 (KTH) is a substrate binding site. Catalysis depends on His-107, which acts as the Proton acceptor. 3'-phosphoadenylyl sulfate-binding positions include Arg-129, Ser-137, Tyr-192, 226-231 (TSFQEM), and 256-258 (RKG).

This sequence belongs to the sulfotransferase 1 family. In terms of assembly, homodimer. As to expression, liver, intestine and at lower level in the kidney.

It is found in the cytoplasm. Its subcellular location is the cytosol. The catalysed reaction is estrone + 3'-phosphoadenylyl sulfate = estrone 3-sulfate + adenosine 3',5'-bisphosphate + H(+). The enzyme catalyses (24S)-hydroxycholesterol + 3'-phosphoadenylyl sulfate = (24S)-hydroxycholesterol 3-sulfate + adenosine 3',5'-bisphosphate + H(+). It carries out the reaction 17beta-estradiol + 3'-phosphoadenylyl sulfate = 17beta-estradiol 3-sulfate + adenosine 3',5'-bisphosphate + H(+). It catalyses the reaction 3beta-hydroxyandrost-5-en-17-one + 3'-phosphoadenylyl sulfate = dehydroepiandrosterone 3-sulfate + adenosine 3',5'-bisphosphate + H(+). The catalysed reaction is 4-ethylphenol + 3'-phosphoadenylyl sulfate = 4-ethylphenyl sulfate + adenosine 3',5'-bisphosphate + H(+). Inhibited by estradiol. Functionally, sulfotransferase that utilizes 3'-phospho-5'-adenylyl sulfate (PAPS) as sulfonate donor to catalyze the sulfate conjugation of estradiol and estrone. Is a key enzyme in estrogen homeostasis, the sulfation of estrogens leads to their inactivation. Also sulfates dehydroepiandrosterone (DHEA), pregnenolone, (24S)-hydroxycholesterol and xenobiotic compounds like ethinylestradiol, equalenin, diethyl stilbesterol and 1-naphthol at significantly lower efficiency. Does not sulfonate cortisol, testosterone and dopamine. May play a role in gut microbiota-host metabolic interaction. O-sulfonates 4-ethylphenol (4-EP), a dietary tyrosine-derived metabolite produced by gut bacteria. The product 4-EPS crosses the blood-brain barrier and may negatively regulate oligodendrocyte maturation and myelination, affecting the functional connectivity of different brain regions associated with the limbic system. This Homo sapiens (Human) protein is Sulfotransferase 1E1 (SULT1E1).